We begin with the raw amino-acid sequence, 413 residues long: uncharacterized protein (413 aa).

The N-acetyltransferase domain occupies 3-155 (MEPRVLRREE…SRVRLSVPAG (153 aa)). Residues 86-88 (VSV), 94-99 (RRGVLT), and 122-123 (SE) each bind acetyl-CoA. The active-site Proton donor is Tyr-127. Phe-413 (proton acceptor; via carboxylate) is an active-site residue.

It belongs to the acetyltransferase Eis family. In terms of assembly, homohexamer; trimer of dimers.

This is an uncharacterized protein from Streptomyces coelicolor (strain ATCC BAA-471 / A3(2) / M145).